The sequence spans 142 residues: Large ribosomal subunit protein uL13 (142 aa).

The protein belongs to the universal ribosomal protein uL13 family. In terms of assembly, part of the 50S ribosomal subunit.

In terms of biological role, this protein is one of the early assembly proteins of the 50S ribosomal subunit, although it is not seen to bind rRNA by itself. It is important during the early stages of 50S assembly. This is Large ribosomal subunit protein uL13 from Azoarcus sp. (strain BH72).